A 357-amino-acid polypeptide reads, in one-letter code: tRNA-specific 2-thiouridylase MnmA (357 aa).

ATP contacts are provided by residues 7–14 (GLSGGVDS) and Leu-33. Cys-94 acts as the Nucleophile in catalysis. A disulfide bond links Cys-94 and Cys-193. Gly-119 is an ATP binding site. The segment at 143 to 145 (KDQ) is interaction with tRNA. The Cysteine persulfide intermediate role is filled by Cys-193. The interaction with tRNA stretch occupies residues 298 to 299 (RY).

This sequence belongs to the MnmA/TRMU family.

Its subcellular location is the cytoplasm. It carries out the reaction S-sulfanyl-L-cysteinyl-[protein] + uridine(34) in tRNA + AH2 + ATP = 2-thiouridine(34) in tRNA + L-cysteinyl-[protein] + A + AMP + diphosphate + H(+). Its function is as follows. Catalyzes the 2-thiolation of uridine at the wobble position (U34) of tRNA, leading to the formation of s(2)U34. In Synechococcus sp. (strain ATCC 27144 / PCC 6301 / SAUG 1402/1) (Anacystis nidulans), this protein is tRNA-specific 2-thiouridylase MnmA.